Consider the following 138-residue polypeptide: Large ribosomal subunit protein uL16 (138 aa).

Over residues 1–16 (MLIPRRVKHRKQHHPG) the composition is skewed to basic residues. The tract at residues 1 to 24 (MLIPRRVKHRKQHHPGRSGAATGG) is disordered.

It belongs to the universal ribosomal protein uL16 family. As to quaternary structure, part of the 50S ribosomal subunit.

Binds 23S rRNA and is also seen to make contacts with the A and possibly P site tRNAs. The polypeptide is Large ribosomal subunit protein uL16 (Paenarthrobacter aurescens (strain TC1)).